The chain runs to 100 residues: ATP synthase subunit c (100 aa).

Helical transmembrane passes span 26–46 (FSVV…AIGM) and 71–91 (MFIA…IALI).

It belongs to the ATPase C chain family. As to quaternary structure, F-type ATPases have 2 components, F(1) - the catalytic core - and F(0) - the membrane proton channel. F(1) has five subunits: alpha(3), beta(3), gamma(1), delta(1), epsilon(1). F(0) has three main subunits: a(1), b(2) and c(10-14). The alpha and beta chains form an alternating ring which encloses part of the gamma chain. F(1) is attached to F(0) by a central stalk formed by the gamma and epsilon chains, while a peripheral stalk is formed by the delta and b chains.

It localises to the cell inner membrane. Its function is as follows. F(1)F(0) ATP synthase produces ATP from ADP in the presence of a proton or sodium gradient. F-type ATPases consist of two structural domains, F(1) containing the extramembraneous catalytic core and F(0) containing the membrane proton channel, linked together by a central stalk and a peripheral stalk. During catalysis, ATP synthesis in the catalytic domain of F(1) is coupled via a rotary mechanism of the central stalk subunits to proton translocation. In terms of biological role, key component of the F(0) channel; it plays a direct role in translocation across the membrane. A homomeric c-ring of between 10-14 subunits forms the central stalk rotor element with the F(1) delta and epsilon subunits. In Campylobacter fetus subsp. fetus (strain 82-40), this protein is ATP synthase subunit c.